The following is a 132-amino-acid chain: Prefoldin subunit alpha (132 aa).

It belongs to the prefoldin subunit alpha family. In terms of assembly, heterohexamer of two alpha and four beta subunits.

Its subcellular location is the cytoplasm. Molecular chaperone capable of stabilizing a range of proteins. Seems to fulfill an ATP-independent, HSP70-like function in archaeal de novo protein folding. In Pyrobaculum islandicum (strain DSM 4184 / JCM 9189 / GEO3), this protein is Prefoldin subunit alpha.